Consider the following 300-residue polypeptide: Mycothiol acetyltransferase (300 aa).

N-acetyltransferase domains are found at residues 4 to 140 and 151 to 300; these read IDWR…RPLT and VRLA…AVAD. Residue Asp36 participates in 1D-myo-inositol 2-(L-cysteinylamino)-2-deoxy-alpha-D-glucopyranoside binding. 79–81 is an acetyl-CoA binding site; it reads LVV. Glu178, Lys219, and Glu227 together coordinate 1D-myo-inositol 2-(L-cysteinylamino)-2-deoxy-alpha-D-glucopyranoside. 231–233 serves as a coordination point for acetyl-CoA; the sequence is VGV. Residue Tyr269 coordinates 1D-myo-inositol 2-(L-cysteinylamino)-2-deoxy-alpha-D-glucopyranoside. Residue 274–279 participates in acetyl-CoA binding; it reads NGAAVK.

Belongs to the acetyltransferase family. MshD subfamily. Monomer.

It carries out the reaction 1D-myo-inositol 2-(L-cysteinylamino)-2-deoxy-alpha-D-glucopyranoside + acetyl-CoA = mycothiol + CoA + H(+). In terms of biological role, catalyzes the transfer of acetyl from acetyl-CoA to desacetylmycothiol (Cys-GlcN-Ins) to form mycothiol. This Mycobacterium sp. (strain JLS) protein is Mycothiol acetyltransferase.